The primary structure comprises 856 residues: Dual specificity protein kinase TTK (856 aa).

Methionine 1 is modified (N-acetylmethionine). The residue at position 32 (threonine 32) is a Phosphothreonine. Phosphoserine is present on residues serine 36, serine 277, and serine 342. At threonine 380 the chain carries Phosphothreonine. A phosphoserine mark is found at serine 383, serine 435, and serine 454. The region spanning 524–790 (YSILKQIGSG…IPELLTHPYV (267 aa)) is the Protein kinase domain. ATP contacts are provided by residues 530 to 538 (IGSGGSSKV) and lysine 552. Aspartate 646 (proton acceptor) is an active-site residue. Residue serine 820 is modified to Phosphoserine. Residues 837 to 856 (CGEGQDSSSSKTFDKKRERK) form a disordered region.

Belongs to the protein kinase superfamily. Ser/Thr protein kinase family. As to quaternary structure, interacts with TPR; the interactions occurs in a microtubule-independent manner. Interacts with MAD1L1 and MAD2L1. Post-translationally, autophosphorylated. In terms of tissue distribution, present in rapidly proliferating cell lines; high levels in testis, bone marrow, spleen and thymus. Low levels in brain, heart, lung and kidney.

The enzyme catalyses L-seryl-[protein] + ATP = O-phospho-L-seryl-[protein] + ADP + H(+). It catalyses the reaction L-threonyl-[protein] + ATP = O-phospho-L-threonyl-[protein] + ADP + H(+). It carries out the reaction L-tyrosyl-[protein] + ATP = O-phospho-L-tyrosyl-[protein] + ADP + H(+). Inhibited by the ATP-competitive kinase inhibitor, SP600125. Involved in mitotic spindle assembly checkpoint signaling, a process that delays anaphase until chromosomes are bioriented on the spindle, and in the repair of incorrect mitotic kinetochore-spindle microtubule attachments. Phosphorylates MAD1L1 to promote the mitotic spindle assembly checkpoint. Phosphorylates CDCA8/Borealin leading to enhanced AURKB activity at the kinetochore. Phosphorylates SKA3 at 'Ser-34' leading to dissociation of the SKA complex from microtubules and destabilization of microtubule-kinetochore attachments. Phosphorylates KNL1, KNTC1 and autophosphorylates. Phosphorylates MCRS1 which enhances recruitment of KIF2A to the minus end of spindle microtubules and promotes chromosome alignment. The chain is Dual specificity protein kinase TTK (Ttk) from Mus musculus (Mouse).